We begin with the raw amino-acid sequence, 404 residues long: uncharacterized protein (404 aa).

The next 6 membrane-spanning stretches (helical) occupy residues 37–57 (LLIL…FVQF), 92–112 (IYNV…FVLG), 122–142 (LLTL…SYIP), 188–208 (MFYA…ILII), 230–250 (IGGI…TIGT), and 272–292 (AFFL…LGIF).

The protein localises to the cell membrane. This is an uncharacterized protein from Mycoplasma pneumoniae (strain ATCC 29342 / M129 / Subtype 1) (Mycoplasmoides pneumoniae).